We begin with the raw amino-acid sequence, 642 residues long: Fork head protein homolog 2 (642 aa).

The segment at 1–23 is disordered; the sequence is MTVRRLESKSEHISDDEERKEQL. Residues 96 to 160 form the FHA domain; it reads IILGREPANP…NGIKVDGKLF (65 aa). A DNA-binding region (fork-head) is located at residues 223-318; that stretch reads KPPYSYSVMI…AKTRKTPRKR (96 aa). The segment covering 310 to 319 has biased composition (basic residues); sequence KTRKTPRKRS. 3 disordered regions span residues 310–392, 519–574, and 586–642; these read KTRK…ETYK, VSDS…TEEN, and ATME…KSSA. 5 positions are modified to phosphoserine: Ser319, Ser321, Ser322, Ser334, and Ser336. The segment covering 348-362 has biased composition (low complexity); the sequence is TSIPAAEPASSTTSA. 3 stretches are compositionally biased toward polar residues: residues 363 to 381, 519 to 552, and 599 to 642; these read RDQT…TAET, VSDS…SANK, and TPTS…KSSA. A phosphoserine mark is found at Ser375, Ser535, and Ser626.

Phosphorylated. Occurs periodically during mitosis.

It is found in the nucleus. Its function is as follows. Required for promoter sequence element PCB-driven, M-phase-specific transcription. Acts as a transcriptional activator with a role in the regulation of mitosis. Binds, cooperatively with mcm1, the CLB cluster regulatory elements throughout the cell cycle. Regulates the periodic transcription of cdc15 and spo12. Required for the correct timing, positioning and contraction of the division septum. This is Fork head protein homolog 2 (fkh2) from Schizosaccharomyces pombe (strain 972 / ATCC 24843) (Fission yeast).